A 238-amino-acid chain; its full sequence is Ankyrin repeat domain-containing protein 49 (238 aa).

S48 carries the phosphoserine modification. ANK repeat units follow at residues 77–105 (LLWA…TRDE), 106–135 (DKYT…DVHA), 139–168 (DGWT…DVNA), and 172–205 (GLLT…GLKN).

It localises to the nucleus. Functionally, may have a role in spermatogenesis where it promotes autophagy in response to serum starvation, via the NF-kappaB pathway. The protein is Ankyrin repeat domain-containing protein 49 (ANKRD49) of Bos taurus (Bovine).